A 1066-amino-acid polypeptide reads, in one-letter code: Pumilio homolog 2 (1066 aa).

The tract at residues 1–260 is interaction with SNAPIN; sequence MNHDFQALAL…TVGLFDYNSQ (260 aa). Phosphoserine occurs at positions 67, 70, 82, and 102. 3 disordered regions span residues 106 to 203, 368 to 408, and 490 to 551; these read KLDS…GPLP, TANQ…AESL, and TGST…SASL. The segment covering 119 to 133 has biased composition (basic and acidic residues); that stretch reads RDAETDGPEKGDQKG. Residues Ser-136, Ser-177, and Ser-181 each carry the phosphoserine modification. Thr-183 carries the phosphothreonine modification. Low complexity predominate over residues 368–383; the sequence is TANQQAASQAQPGQQQ. Positions 394–406 are enriched in polar residues; that stretch reads ITPSQGQQGQQAE. Position 395 is a phosphothreonine (Thr-395). Residues 503-514 are compositionally biased toward low complexity; it reads QPPQQQQQQQQP. The segment covering 515 to 525 has biased composition (polar residues); that stretch reads STNLQSNSFYG. Residues 526–540 are compositionally biased toward low complexity; that stretch reads SSSLTNSSQSSSLFS. Phosphoserine occurs at positions 587 and 592. Residues 620–650 are disordered; sequence SPIGMPLPSQTPGHSLTPPPSLSSHGSSSSL. The segment covering 630-650 has biased composition (low complexity); sequence TPGHSLTPPPSLSSHGSSSSL. Residue Arg-674 is modified to Omega-N-methylarginine. Phosphoserine occurs at positions 684 and 700. Positions 706–1048 constitute a PUM-HD domain; that stretch reads GRSRLLEDFR…HILAKLEKYY (343 aa). Pumilio repeat units lie at residues 726 to 761, 762 to 797, 798 to 835, 836 to 871, 872 to 907, 908 to 943, 944 to 979, and 980 to 1022; these read DLIGHIVEFSQDQHGSRFIQQKLERATPAERQIVFN, EILQAAYQLMTDVFGNYVIQKFFEFGSLDQKLALAT, RIRGHVLPLALQMYGCRVIQKALESISSDQQVISEMVK, ELDGHVLKCVKDQNGNHVVQKCIECVQPQSLQFIID, AFKGQVFVLSTHPYGCRVIQRILEHCTAEQTLPILE, ELHQHTEQLVQDQYGNYVIQHVLEHGRPEDKSKIVS, EIRGKVLALSQHKFASNVVEKCVTHASRAERALLID, and EVCC…IIMH. The tract at residues 741–745 is adenine-nucleotide binding in RNA target; sequence SRFIQ. The tract at residues 777–781 is uracil-nucleotide binding in RNA target; the sequence is NYVIQ. The adenine-nucleotide binding in RNA target stretch occupies residues 813–817; that stretch reads CRVIQ. Positions 851–855 are non-specific-nucleotide binding in RNA target; it reads NHVVQ. Residues 887–891 are adenine-nucleotide binding in RNA target; it reads CRVIQ. Residues 923-927 form a uracil-nucleotide binding in RNA target region; sequence NYVIQ. The tract at residues 959–963 is guanine-nucleotide binding in RNA target; that stretch reads SNVVE. Residues 1002 to 1006 are uracil-nucleotide binding in RNA target; sequence NYVVQ.

Homodimer; homodimerizes in vitro. Interacts with DAZ1, DAZL and NANOS1 via its pumilio repeats. Interacts with NANOS3. Interacts with SNAPIN. Recruits the CCR4-POP2-NOT deadenylase leading to translational inhibition and mRNA degradation. Interacts with DDX20. In case of viral infection, interacts with DHX58. Widely expressed. Expressed in embryonic stem cells, heart, kidney, lung, skin, intestine, spleen and thymus. Expressed at intermediate level in brain and liver. Weakly or not expressed in muscles and stomach. Expressed at various stages of myeloid and lymphoid cell development. In the testis expressed in the spermatogoni, spermatocytes, spermatids and Sertoli cells.

It localises to the cytoplasm. The protein localises to the cytoplasmic granule. Its subcellular location is the perinuclear region. Functionally, sequence-specific RNA-binding protein that acts as a post-transcriptional repressor by binding the 3'-UTR of mRNA targets. Binds to an RNA consensus sequence, the Pumilio Response Element (PRE), 5'-UGUANAUA-3', that is related to the Nanos Response Element (NRE). Mediates post-transcriptional repression of transcripts via different mechanisms: acts via direct recruitment of the CCR4-POP2-NOT deadenylase leading to translational inhibition and mRNA degradation. Also mediates deadenylation-independent repression by promoting accessibility of miRNAs. Acts as a post-transcriptional repressor of E2F3 mRNAs by binding to its 3'-UTR and facilitating miRNA regulation. Plays a role in cytoplasmic sensing of viral infection. Represses a program of genes necessary to maintain genomic stability such as key mitotic, DNA repair and DNA replication factors. Its ability to repress those target mRNAs is regulated by the lncRNA NORAD (non-coding RNA activated by DNA damage) which, due to its high abundance and multitude of PUMILIO binding sites, is able to sequester a significant fraction of PUM1 and PUM2 in the cytoplasm. May regulate DCUN1D3 mRNA levels. May support proliferation and self-renewal of stem cells. Binds specifically to miRNA MIR199A precursor, with PUM1, regulates miRNA MIR199A expression at a postranscriptional level. This chain is Pumilio homolog 2 (Pum2), found in Mus musculus (Mouse).